The chain runs to 251 residues: uncharacterized protein (251 aa).

This sequence to M.jannaschii MJ1311.

This is an uncharacterized protein from Methanocaldococcus jannaschii (strain ATCC 43067 / DSM 2661 / JAL-1 / JCM 10045 / NBRC 100440) (Methanococcus jannaschii).